The primary structure comprises 163 residues: Disulfide bond formation protein B 1 (163 aa).

The Cytoplasmic segment spans residues 1 to 9 (MPLASPRQL). A helical membrane pass occupies residues 10-26 (FLLAFLACVAIMGGALY). At 27–44 (LEHVVGLEACPLCVVQRI) the chain is on the periplasmic side. Cysteines 36 and 39 form a disulfide. Residues 45 to 61 (FFILIGLTCLAGAIQGP) form a helical membrane-spanning segment. The Cytoplasmic portion of the chain corresponds to 62-67 (GLRGRR). Residues 68–85 (IYSVLVFLLALGGGATAA) traverse the membrane as a helical segment. At 86-142 (RQVWLQTVPLDQLPACLPSLDYMMQALPFQEVIRLVLHGTADCAQVSWTLFTLSIPE) the chain is on the periplasmic side. The cysteines at positions 101 and 128 are disulfide-linked. Residues 143-161 (WSLLAFVAYLGFSIVQFLR) traverse the membrane as a helical segment. Residues 162–163 (RA) lie on the Cytoplasmic side of the membrane.

Belongs to the DsbB family.

The protein resides in the cell inner membrane. Functionally, required for disulfide bond formation in some periplasmic proteins. Acts by oxidizing the DsbA protein. This chain is Disulfide bond formation protein B 1 (dsbB1), found in Pseudomonas aeruginosa (strain ATCC 15692 / DSM 22644 / CIP 104116 / JCM 14847 / LMG 12228 / 1C / PRS 101 / PAO1).